A 379-amino-acid chain; its full sequence is Lipoyl synthase 2, mitochondrial (379 aa).

[4Fe-4S] cluster-binding residues include cysteine 106, cysteine 111, cysteine 117, cysteine 137, cysteine 141, cysteine 144, and serine 352. Residues glutamate 122–leucine 341 form the Radical SAM core domain.

The protein belongs to the radical SAM superfamily. Lipoyl synthase family. [4Fe-4S] cluster is required as a cofactor.

Its subcellular location is the mitochondrion. It carries out the reaction [[Fe-S] cluster scaffold protein carrying a second [4Fe-4S](2+) cluster] + N(6)-octanoyl-L-lysyl-[protein] + 2 oxidized [2Fe-2S]-[ferredoxin] + 2 S-adenosyl-L-methionine + 4 H(+) = [[Fe-S] cluster scaffold protein] + N(6)-[(R)-dihydrolipoyl]-L-lysyl-[protein] + 4 Fe(3+) + 2 hydrogen sulfide + 2 5'-deoxyadenosine + 2 L-methionine + 2 reduced [2Fe-2S]-[ferredoxin]. The protein operates within protein modification; protein lipoylation via endogenous pathway; protein N(6)-(lipoyl)lysine from octanoyl-[acyl-carrier-protein]: step 2/2. In terms of biological role, catalyzes the radical-mediated insertion of two sulfur atoms into the C-6 and C-8 positions of the octanoyl moiety bound to the lipoyl domains of lipoate-dependent enzymes, thereby converting the octanoylated domains into lipoylated derivatives. The protein is Lipoyl synthase 2, mitochondrial of Drosophila yakuba (Fruit fly).